Reading from the N-terminus, the 71-residue chain is Large ribosomal subunit protein uL29 (71 aa).

The protein belongs to the universal ribosomal protein uL29 family.

The protein is Large ribosomal subunit protein uL29 of Roseiflexus sp. (strain RS-1).